Here is a 319-residue protein sequence, read N- to C-terminus: Cobalamin biosynthesis protein CobD (319 aa).

The next 5 membrane-spanning stretches (helical) occupy residues 56–76 (VMWL…LALA), 78–98 (GIHP…ALAG), 153–173 (VDGI…LAMA), 204–224 (VANF…AVLC), and 296–316 (LMWV…YWLV).

The protein belongs to the CobD/CbiB family.

Its subcellular location is the cell membrane. It participates in cofactor biosynthesis; adenosylcobalamin biosynthesis. Converts cobyric acid to cobinamide by the addition of aminopropanol on the F carboxylic group. This is Cobalamin biosynthesis protein CobD from Klebsiella pneumoniae subsp. pneumoniae (strain ATCC 700721 / MGH 78578).